Reading from the N-terminus, the 122-residue chain is Large ribosomal subunit protein uL14 (122 aa).

It belongs to the universal ribosomal protein uL14 family. In terms of assembly, part of the 50S ribosomal subunit. Forms a cluster with proteins L3 and L19. In the 70S ribosome, L14 and L19 interact and together make contacts with the 16S rRNA in bridges B5 and B8.

Its function is as follows. Binds to 23S rRNA. Forms part of two intersubunit bridges in the 70S ribosome. The polypeptide is Large ribosomal subunit protein uL14 (Mycoplasma pneumoniae (strain ATCC 29342 / M129 / Subtype 1) (Mycoplasmoides pneumoniae)).